Reading from the N-terminus, the 99-residue chain is Protein Frey (99 aa).

Residues 13–29 traverse the membrane as a helical segment; sequence AGLSLFALYLVLAAALL. The interval 64–90 is disordered; sequence RPKHPWPRGPRPLLSRAQQRKRDGPDM.

Interacts with SPPL2C (via active sites); the interaction stabilizes FREY1 protein and inhibits SPPL2C proteolytic activity. Interacts with IZUMO1; the interaction retains IZUMO1 at the endoplasmic reticulum membrane and coordinates IZUMO1 complex assembly.

Its subcellular location is the endoplasmic reticulum membrane. Its function is as follows. Key regulator for male fertility expressed transiently in round spermatids where it recruits IZUMO1 at the endoplasmic reticulum (ER) membrane and coordinates the oolemmal binding multimeric complex (IZUMO1 complex) assembly. Upon complete assembly of the IZUMO1 complex, its ER retention is released, facilitating IZUMO1 complex export to the acrosome. Through the interaction with SPPL2C, inhibits its intramembrane protease activity directly accessing the catalytic center of an I-CLiP. The sequence is that of Protein Frey (FREY1) from Bos taurus (Bovine).